We begin with the raw amino-acid sequence, 96 residues long: Large ribosomal subunit protein bL27 (96 aa).

Residues 1-9 (MLRLDLQFF) constitute a propeptide that is removed on maturation.

This sequence belongs to the bacterial ribosomal protein bL27 family. The N-terminus is cleaved by ribosomal processing cysteine protease Prp.

This Anoxybacillus flavithermus (strain DSM 21510 / WK1) protein is Large ribosomal subunit protein bL27.